Reading from the N-terminus, the 1168-residue chain is Myosin IC heavy chain (1168 aa).

Positions 7–666 (HGVDDMVMLT…SVFSLEELRD (660 aa)) constitute a Myosin motor domain. An ATP-binding site is contributed by 101–108 (GESGAGKT). At Ser311 the chain carries Phosphoserine. The actin-binding stretch occupies residues 542–564 (INILVATLSKCTPHYIRCIKPNE). In terms of domain architecture, TH1 spans 704 to 892 (KERRRLSLER…KVSVAPGLPP (189 aa)). 3 disordered regions span residues 876 to 909 (DGKV…GGAS), 921 to 978 (ILGA…APGP), and 1036 to 1168 (AAAP…PPGM). A compositionally biased stretch (polar residues) spans 895–909 (APNIQAPQETSGGAS). 2 stretches are compositionally biased toward gly residues: residues 924-939 (AKGG…GGPS) and 950-959 (PGGGGGGPSP). Low complexity predominate over residues 960–978 (FGGRPSPSGPPAAASAPGP). The region spanning 976–1035 (PGPEQARALYDFAAENPDELTFNEGAVVTVINKSNPDWWEGELNGQRGVFPASYVELIPR) is the SH3 domain. The span at 1040–1052 (APGPSGGPRPAPP) shows a compositional bias: pro residues. 2 stretches are compositionally biased toward gly residues: residues 1063–1083 (GGPG…GRGG) and 1090–1099 (GRAGPPGGRG). Low complexity predominate over residues 1100–1112 (MPAPGGAAPRGRG). Residues 1120–1141 (GPPGGGRGGAPPPGGMRGRGGP) show a composition bias toward gly residues. The span at 1152–1161 (GGMMPPRGRA) shows a compositional bias: low complexity.

The protein belongs to the TRAFAC class myosin-kinesin ATPase superfamily. Myosin family. Myosin I heavy chain is single-headed. Dimer of a heavy and a light chain. Inability to self-assemble into filaments.

Functionally, myosin is a protein that binds to F-actin and has ATPase activity that is activated by F-actin. This chain is Myosin IC heavy chain (MIC), found in Acanthamoeba castellanii (Amoeba).